An 895-amino-acid polypeptide reads, in one-letter code: Clathrin interactor EPSIN 2 (895 aa).

An ENTH domain is found at 18–150 (KKVLKVPGVE…NDKERIAEVR (133 aa)). Basic and acidic residues-rich tracts occupy residues 150–161 (RQKAAANRDKYR), 177–236 (DKYD…RSRS), and 245–257 (RSSE…DGHS). The segment at 150–396 (RQKAAANRDK…PTVTSMSAPT (247 aa)) is disordered. Residues S270 and S282 each carry the phosphoserine modification. The span at 329 to 348 (AAPEAASPPTGTNTANTTAT) shows a compositional bias: low complexity. Polar residues-rich tracts occupy residues 349 to 358 (FVNESPSQKV) and 387 to 396 (PTVTSMSAPT). The Clathrin binding signature appears at 409 to 413 (LADVF). Disordered stretches follow at residues 436–533 (AGPA…PQEQ) and 758–784 (KQTN…GRSG). Low complexity predominate over residues 440 to 454 (PSFSTSQPSTQSFDD). The ALPHA-ADR binding motif lies at 454–456 (DPF). Polar residues-rich tracts occupy residues 464–479 (FTST…NFGA), 515–533 (PASQ…PQEQ), and 759–769 (QTNTPATSTIN).

It belongs to the epsin family. As to quaternary structure, interacts with clathrin, VTI12, DELTA-ADR and ALPHA-ADR.

The protein resides in the golgi apparatus. It localises to the cytoplasmic vesicle. Its subcellular location is the clathrin-coated vesicle. Its function is as follows. May have a role in transport via clathrin-coated vesicles from the trans-Golgi network to endosomes. Stimulates clathrin assembly. Binds to membranes enriched in phosphatidylinositol 3-phosphate (PtdIns(3)P). Plays an important role in protein trafficking. This Arabidopsis thaliana (Mouse-ear cress) protein is Clathrin interactor EPSIN 2 (EPSIN2).